The primary structure comprises 154 residues: Large ribosomal subunit protein uL13 (154 aa).

This sequence belongs to the universal ribosomal protein uL13 family. Part of the 50S ribosomal subunit.

This protein is one of the early assembly proteins of the 50S ribosomal subunit, although it is not seen to bind rRNA by itself. It is important during the early stages of 50S assembly. The protein is Large ribosomal subunit protein uL13 of Rhizobium etli (strain CIAT 652).